The primary structure comprises 496 residues: Probable 26S proteasome non-ATPase regulatory subunit 3 (496 aa).

Residues 249 to 428 (ARFLYYLGRI…GYMRSKESTD (180 aa)) enclose the PCI domain. The segment at 458–480 (RYPPKSYGKELESAEERREREQQ) is disordered. Residues 464 to 480 (YGKELESAEERREREQQ) are compositionally biased toward basic and acidic residues.

The protein belongs to the proteasome subunit S3 family. In terms of assembly, the 26S proteasome is composed of a core protease, known as the 20S proteasome, capped at one or both ends by the 19S regulatory complex (RC). The RC is composed of at least 18 different subunits in two subcomplexes, the base and the lid, which form the portions proximal and distal to the 20S proteolytic core, respectively.

Acts as a regulatory subunit of the 26 proteasome which is involved in the ATP-dependent degradation of ubiquitinated proteins. The polypeptide is Probable 26S proteasome non-ATPase regulatory subunit 3 (Dox-A2) (Anopheles gambiae (African malaria mosquito)).